A 125-amino-acid chain; its full sequence is MRLSSTTFVVLAAVLLASGTAVSKADETGVTNVNAVHSPNVLAGVDKRFLRSHHTEDGKAKLSNYDNEERNGLFAAGTLSDMANDMIFRFKMFTKWKANGHLPKAIKKDIPRSLYKAYKIHHRMN.

A signal peptide spans 1–25 (MRLSSTTFVVLAAVLLASGTAVSKA). Residues 48–70 (RFLRSHHTEDGKAKLSNYDNEER) carry the RxLR-dEER motif.

Belongs to the RxLR effector family.

The protein resides in the secreted. The protein localises to the host cell. Its function is as follows. Effector that suppresses plant defense responses during the early stages of pathogen infection. Suppresses cell death induced by effectors and PAMPs in plant hosts. Triggers a hypersensitive response (HR) in the presence of Rps1d. Suppresses BAX-induced cell death and enhanced P.capsici infection in Nicotiana benthamiana. Also suppresses effector-triggered immunity induction by associating with Avr1b and Rps1b, suggesting a role in suppressing plant immunity. This is RxLR effector protein Avh6 from Phytophthora sojae (Soybean stem and root rot agent).